A 298-amino-acid polypeptide reads, in one-letter code: Acetylglutamate kinase (298 aa).

Substrate contacts are provided by residues 73–74 (GG), Arg95, and Asn188.

Belongs to the acetylglutamate kinase family. ArgB subfamily.

Its subcellular location is the cytoplasm. The enzyme catalyses N-acetyl-L-glutamate + ATP = N-acetyl-L-glutamyl 5-phosphate + ADP. Its pathway is amino-acid biosynthesis; L-arginine biosynthesis; N(2)-acetyl-L-ornithine from L-glutamate: step 2/4. Functionally, catalyzes the ATP-dependent phosphorylation of N-acetyl-L-glutamate. This Nostoc punctiforme (strain ATCC 29133 / PCC 73102) protein is Acetylglutamate kinase.